Reading from the N-terminus, the 701-residue chain is MNKYVLLGVTALIMAMVICVEANDGNSPSRKMEEVHRESKLMITKTTVSIICASTDYKQDCTTSLATVRSPDPRNLIRSAFDLAIISIRSGIDRGMIDLKSRADADMHTREALNTCRELMDDAIDDLRKTRDKFRGFLFTRLSDFVEDLCVWLSGSITYQQTCIDGFEGIDSEAAVMMERVMRKGQHLTSNGLAIAANLDKLLKAFRIPFPFLRSRRGRLGILGSGSSRDESVGSSQDSPPNEDSSDDSPSTVDSSENQPVDSSSENQSSDSSNNRPLDSSKNQQMESSEDTPKKSAFSGNQPLDDSSDKLPQKSTSSENQPLDSSENPPQKSTSSENRPLDPLRKLNPLNKLDSLKDRHLSEEGEFPPWVTPHSRRLLARRPRNNGIKANVVVAKDGSGKCKTIAQALAMVPMKNTKKFVIHIKEGVYKEKVEVTKKMLHVMFVGDGPTKTVITGDIAFLPDQVGTYRTASVAVNGDYFMAKDIGFENTAGAARHQAVALRVSADFAVFFNCHMNGYQDTLYVHTHRQFYRNCRVSGTIDFVFGDAKAVFQNCEFVIRRPMEHQQCIVTAQGRKDRRETTGIVIHNSRITGDASYLPVKAKNRAFLGRPWKEFSRTIIMNTEIDDVIDPEGWLKWNETFALNTLFYTEYRNRGRGSGQGRRVRWRGIKRISDRAAREFAPGNFLRGNTWIPQTRIPYNAN.

An N-terminal signal peptide occupies residues 1 to 22; the sequence is MNKYVLLGVTALIMAMVICVEA. The segment at 42–195 is pectinesterase inhibitor 43; that stretch reads MITKTTVSII…QHLTSNGLAI (154 aa). Composition is skewed to low complexity over residues 221–256 and 263–275; these read GILGSGSSRDESVGSSQDSPPNEDSSDDSPSTVDSS and SSSENQSSDSSNN. A disordered region spans residues 221–351; that stretch reads GILGSGSSRD…DPLRKLNPLN (131 aa). N-linked (GlcNAc...) asparagine glycosylation is present at N267. Composition is skewed to polar residues over residues 276–287 and 313–338; these read RPLDSSKNQQME and QKSTSSENQPLDSSENPPQKSTSSEN. The pectinesterase 43 stretch occupies residues 391–688; it reads NVVVAKDGSG…FAPGNFLRGN (298 aa). Substrate-binding residues include T467 and Q497. D520 functions as the Proton donor; for pectinesterase activity in the catalytic mechanism. Cysteines 534 and 554 form a disulfide. D541 serves as the catalytic Nucleophile; for pectinesterase activity. Substrate-binding residues include R609 and W611. An N-linked (GlcNAc...) asparagine glycan is attached at N637.

The protein in the N-terminal section; belongs to the PMEI family. It in the C-terminal section; belongs to the pectinesterase family. Expressed in flower buds.

Its subcellular location is the secreted. The protein resides in the cell wall. The enzyme catalyses [(1-&gt;4)-alpha-D-galacturonosyl methyl ester](n) + n H2O = [(1-&gt;4)-alpha-D-galacturonosyl](n) + n methanol + n H(+). The protein operates within glycan metabolism; pectin degradation; 2-dehydro-3-deoxy-D-gluconate from pectin: step 1/5. In terms of biological role, acts in the modification of cell walls via demethylesterification of cell wall pectin. The protein is Putative pectinesterase/pectinesterase inhibitor 43 (PME43) of Arabidopsis thaliana (Mouse-ear cress).